The chain runs to 90 residues: Conotoxin Rg9.1 (90 aa).

The N-terminal stretch at Met1–Gly20 is a signal peptide. A propeptide spanning residues Asn21–Gln60 is cleaved from the precursor. 3 disulfides stabilise this stretch: Cys58–Cys71, Cys62–Cys73, and Cys67–Cys80.

The protein belongs to the conotoxin P superfamily. As to expression, expressed by the venom duct.

The protein resides in the secreted. In terms of biological role, probable neurotoxin that inhibits ion channels. The sequence is that of Conotoxin Rg9.1 from Conus regius (Crown cone).